The primary structure comprises 842 residues: Alpha-glucan phosphorylase, H isozyme (842 aa).

K688 is subject to N6-(pyridoxal phosphate)lysine.

This sequence belongs to the glycogen phosphorylase family. Pyridoxal 5'-phosphate serves as cofactor.

Its subcellular location is the cytoplasm. The catalysed reaction is [(1-&gt;4)-alpha-D-glucosyl](n) + phosphate = [(1-&gt;4)-alpha-D-glucosyl](n-1) + alpha-D-glucose 1-phosphate. Its function is as follows. Phosphorylase is an important allosteric enzyme in carbohydrate metabolism. Enzymes from different sources differ in their regulatory mechanisms and in their natural substrates. However, all known phosphorylases share catalytic and structural properties. The H isoform exhibits higher affinity for branched polyglucans such as soluble starch or glycogen. This is Alpha-glucan phosphorylase, H isozyme from Vicia faba (Broad bean).